The following is a 245-amino-acid chain: MAPK-interacting and spindle-stabilizing protein-like (245 aa).

The disordered stretch occupies residues 1-245 (MSDEFSLADA…PMPGGPHSYH (245 aa)). An N-acetylserine modification is found at Ser2. A phosphoserine mark is found at Ser2, Ser6, and Ser15. Residues 17-26 (AKTSAVSNTK) are compositionally biased toward polar residues. The segment covering 34-51 (WPGSNPWNNPSAPSSVPS) has biased composition (low complexity). Composition is skewed to pro residues over residues 74–127 (SVPP…PELP), 164–190 (PNMPYPSPGPYPAPPPPQAPGAAPPVP), and 198–207 (AWGPPAPYPA).

The protein belongs to the MISS family.

In Homo sapiens (Human), this protein is MAPK-interacting and spindle-stabilizing protein-like (MAPK1IP1L).